The chain runs to 504 residues: Cytochrome P450 monooxygenase braC (504 aa).

Residues 4-24 form a helical membrane-spanning segment; sequence LYLPTIWASTLTAATIFIVAV. Cysteine 448 provides a ligand contact to heme.

Belongs to the cytochrome P450 family. The cofactor is heme.

It is found in the membrane. Its pathway is secondary metabolite biosynthesis. Functionally, cytochrome P450 monooxygenase; part of the gene cluster that mediates the biosynthesis of the brasilane terpene glycosides brasilane D and E. The biosynthesis starts with the activity of the terpene cyclase braA that converts farnesyl pyrophosphate into the sesquiterpene alcohol trichobrasilenol. Subsequently, trichobrasilenol is glycosylated by the O-glycosyltransferase braB putatively using UDP-GlcNAc as sugar donor to yield brasilane A. The latter then undergoes two rounds of oxidation performed by the cytochrome P450 monooxygenase braC. In the first round braC hydroxylates C-12 forming brasilane D, which serves as substrate in the second round to establish the epoxide at the bond between C-5 and C-10 and oxidize the alcohol at C-12 to an aldehyde leading to the final product brasilane E. The sequence is that of Cytochrome P450 monooxygenase braC from Annulohypoxylon truncatum (Hypoxylon truncatum).